The following is a 248-amino-acid chain: Probable transcriptional regulatory protein PLES_43501 (248 aa).

The protein belongs to the TACO1 family.

The protein localises to the cytoplasm. This chain is Probable transcriptional regulatory protein PLES_43501, found in Pseudomonas aeruginosa (strain LESB58).